The primary structure comprises 369 residues: Erythronate-4-phosphate dehydrogenase (369 aa).

Residues serine 45 and threonine 66 each coordinate substrate. Aspartate 146 provides a ligand contact to NAD(+). Arginine 209 is a catalytic residue. An NAD(+)-binding site is contributed by aspartate 233. Residue glutamate 238 is part of the active site. Histidine 255 acts as the Proton donor in catalysis. Glycine 258 is an NAD(+) binding site.

Belongs to the D-isomer specific 2-hydroxyacid dehydrogenase family. PdxB subfamily. In terms of assembly, homodimer.

It localises to the cytoplasm. The catalysed reaction is 4-phospho-D-erythronate + NAD(+) = (R)-3-hydroxy-2-oxo-4-phosphooxybutanoate + NADH + H(+). The protein operates within cofactor biosynthesis; pyridoxine 5'-phosphate biosynthesis; pyridoxine 5'-phosphate from D-erythrose 4-phosphate: step 2/5. Its function is as follows. Catalyzes the oxidation of erythronate-4-phosphate to 3-hydroxy-2-oxo-4-phosphonooxybutanoate. The chain is Erythronate-4-phosphate dehydrogenase from Porphyromonas gingivalis (strain ATCC BAA-308 / W83).